A 525-amino-acid polypeptide reads, in one-letter code: Matrix extracellular phosphoglycoprotein (525 aa).

Residues M1–A17 form the signal peptide. 3 disordered regions span residues T24–R95, A187–I216, and E237–D525. Basic and acidic residues-rich tracts occupy residues E25–G46 and I64–S73. Polar residues-rich tracts occupy residues S75 to R95 and D200 to S210. Positions T242–D264 are dentonin. Positions R247 to D249 match the Cell attachment site motif. The O-linked (Xyl...) (chondroitin sulfate) serine glycan is linked to S256. Composition is skewed to basic and acidic residues over residues E292–N312 and T319–D328. 2 N-linked (GlcNAc...) asparagine glycosylation sites follow: N477 and N478. Residues R507–D525 form an ASARM motif; interaction with PHEX region. The segment covering S513–D525 has biased composition (low complexity).

Belongs to the PF07175/osteoregulin family. In terms of assembly, interacts (via the ASARM motif) with PHEX; the interaction is zinc-dependent. In terms of processing, phosphorylated on serine residues in the ASARM motif (in vitro) by FAM20C; the phosphorylation is important for the inhibition of bone mineralization. Post-translationally, cleaved by CTSB/cathepsin B; the cleavage is blocked by metalloprotease PHEX. In terms of tissue distribution, detected in urine (at protein level). Expressed by osteoblasts. Expressed by stem cells in dental pulp. Expressed by mesenchymal cells in dental papilla and dental pulp. Expressed in teeth, specifically in decidious dentin. Expressed in ondotoblasts. Expressed in salivary glands. Secreted from oncogenic hypophosphatemic tumors.

The protein localises to the secreted. The protein resides in the extracellular space. It localises to the extracellular matrix. Its function is as follows. Promotes renal phosphate excretion and inhibits intestinal phosphate absorption. Promotes bone mineralization by osteoblasts and cartilage mineralization by chondrocytes. Regulates the mineralization of the extracellular matrix of the craniofacial complex, such as teeth, bone and cartilage. Promotes dental pulp stem cell proliferation and differentiation. The protein is Matrix extracellular phosphoglycoprotein (MEPE) of Homo sapiens (Human).